A 923-amino-acid polypeptide reads, in one-letter code: Transportin-3 (923 aa).

An N-acetylmethionine modification is found at Met1. Ser74 is subject to Phosphoserine. Thr896 carries the post-translational modification Phosphothreonine.

In terms of assembly, interacts with (GTP-bound) Ran. Interacts with (phosphorylated) SFRS1 and SFRS2; leading to their nuclear import. Interacts with NUP62. Interacts with RBM4. Interacts with CPSF6, promoting its nuclear import. As to quaternary structure, (Microbial infection) Interacts with the HIV-1 pre-integration complex (PIC), which is composed of viral genome, matrix protein, Vpr and integrase. Interacts with HIV-1 integrase protein; the interaction is direct. As to expression, expressed in skeletal muscle.

The protein resides in the nucleus envelope. The protein localises to the cytoplasm. Importin, which transports target proteins into the nucleus. Specifically mediates the nuclear import of splicing factor serine/arginine (SR) proteins, such as RBM4, SFRS1 and SFRS2, by recognizing phosphorylated SR domains. Also mediates the nuclear import of serine/arginine (SR) protein CPSF6, independently of CPSF6 phosphorylation. The nuclear import process is regulated by the small GTPase Ran that partitions between cytoplasm and nucleus in the predominantly GDP- and GTP-bound form, respectively. Importin associates with target cargo proteins in the cytoplasm, and the competitive binding of GTP-bound Ran induces the release of cargos in the nucleus. Functionally, (Microbial infection) Involved in immunodeficiency virus (HIV-1) infection by importing the pre-integration complex (PIC) into the nucleus. Required for a nuclear maturation step of HIV-1 prior to integration. This chain is Transportin-3, found in Homo sapiens (Human).